We begin with the raw amino-acid sequence, 255 residues long: SLLQGGSAYLPGRPEIQWKNLNPMQLMEELGQFTSVDGFKEMLDKADVGQAYMERPCLDPMDPQCPESAPNKQKRRVPNIAQELAGGCYGFSKRFMHWQEELILGGTVRDSQDRLLSAEALQTMFLLMSSRQLYEHFRDNYEIHDINWTEEKAAAILETWQRKFVELAQQSAPENSSQIIHAFSTTTLNDIMKSFSDVSVIRVAGGYLLMLAYACVTMLRWDCTKSQGAVGLAGVLLVALSVASGLGLCSLLGIS.

Residues 1-197 are Extracellular-facing; sequence SLLQGGSAYL…LNDIMKSFSD (197 aa). Residues Asn147 and Asn175 are each glycosylated (N-linked (GlcNAc...) asparagine). Residues 198-218 traverse the membrane as a helical segment; sequence VSVIRVAGGYLLMLAYACVTM. Residues 199 to 255 form the SSD domain; the sequence is SVIRVAGGYLLMLAYACVTMLRWDCTKSQGAVGLAGVLLVALSVASGLGLCSLLGIS. Topologically, residues 219–227 are cytoplasmic; it reads LRWDCTKSQ. The chain crosses the membrane as a helical span at residues 228-248; the sequence is GAVGLAGVLLVALSVASGLGL. At 249–255 the chain is on the extracellular side; the sequence is CSLLGIS.

Belongs to the patched family. In terms of tissue distribution, in the eye, detected in neural retina, iris, retinal pigment epithelium, but not in lens.

The protein localises to the membrane. May act as a receptor for sonic hedgehog (SHH). In Cynops pyrrhogaster (Japanese fire-bellied newt), this protein is Protein patched homolog 2 (PTC2).